The primary structure comprises 63 residues: Large ribosomal subunit protein bL35 (63 aa).

It belongs to the bacterial ribosomal protein bL35 family.

The protein is Large ribosomal subunit protein bL35 of Campylobacter concisus (strain 13826).